A 187-amino-acid chain; its full sequence is Ribosome-recycling factor (187 aa).

It belongs to the RRF family.

The protein localises to the cytoplasm. Its function is as follows. Responsible for the release of ribosomes from messenger RNA at the termination of protein biosynthesis. May increase the efficiency of translation by recycling ribosomes from one round of translation to another. The protein is Ribosome-recycling factor of Rhodopseudomonas palustris (strain BisB5).